Here is a 481-residue protein sequence, read N- to C-terminus: Tryptophan--tRNA ligase, cytoplasmic (481 aa).

In terms of domain architecture, WHEP-TRS spans 12 to 68 (SPLELFNSIATQGELVRSLKAGNAPKDEIDSAVKMLLSLKMSYKAAMGEEYKAGCPP). Lys158 bears the N6-succinyllysine mark. Residues 168-177 (PSSEAMHLGH) carry the 'HIGH' region motif. Residues 353 to 357 (KMSAS) carry the 'KMSKS' region motif. At Ser355 the chain carries Phosphoserine.

Belongs to the class-I aminoacyl-tRNA synthetase family. In terms of assembly, homodimer. Interacts with oxidized form of GAPDH. Post-translationally, proteolytic cleavage generates 2 forms; T1-TrpRS and T2-TrpRS. Isoform 2 is widely expressed, isoform 1 is found only in embryonic stem cells.

Its subcellular location is the cytoplasm. It carries out the reaction tRNA(Trp) + L-tryptophan + ATP = L-tryptophyl-tRNA(Trp) + AMP + diphosphate + H(+). Catalyzes the attachment of tryptophan to tRNA(Trp) in a two-step reaction: tryptophan is first activated by ATP to form Trp-AMP and then transferred to the acceptor end of the tRNA(Trp). Could also possess an angiostatic activity. This is Tryptophan--tRNA ligase, cytoplasmic from Mus musculus (Mouse).